A 140-amino-acid polypeptide reads, in one-letter code: Transmembrane protein 107 (140 aa).

The next 2 helical transmembrane spans lie at 7–27 (LVPS…TLFW) and 53–73 (LVAA…GFLS). N-linked (GlcNAc...) asparagine glycosylation occurs at Asn79. Helical transmembrane passes span 83–103 (SLLS…FVFE) and 113–133 (IFTF…IAVF).

In terms of assembly, part of the tectonic-like complex (also named B9 complex). Interacts with TMEM237, TMEM231, MKS1 and TMEM216.

It localises to the membrane. Its subcellular location is the cell projection. It is found in the cilium. Its function is as follows. Plays a role in cilia formation and embryonic patterning. Requires for normal Sonic hedgehog (Shh) signaling in the neural tube and acts in combination with GLI2 and GLI3 to pattern ventral and intermediate neuronal cell types. During ciliogenesis regulates the ciliary transition zone localization of some MKS complex proteins. The chain is Transmembrane protein 107 from Mus musculus (Mouse).